A 378-amino-acid chain; its full sequence is Diacetylchitobiose uptake system ATP-binding protein MsiK (378 aa).

Residues 4–236 (VTFDKATRVY…PANLFVAGFI (233 aa)) enclose the ABC transporter domain. Residue 38–45 (GPSGCGKS) participates in ATP binding.

It belongs to the ABC transporter superfamily. As to quaternary structure, the DasABC-MsiK complex is composed of two ATP-binding proteins (MsiK), two transmembrane proteins (DasB and DasC) and a solute-binding protein (DasA). The NgcEFG-MsiK complex is composed of two ATP-binding proteins (MsiK), two transmembrane proteins (NgcF and NgcG) and a solute-binding protein (NgcE).

Its subcellular location is the cell membrane. Functionally, part of the ABC transporter complexes DasABC-MsiK and NgcEFG-MsiK involved in N,N'-diacetylchitobiose ((GlcNAc)2) uptake. Responsible for energy coupling to the transport system. In Streptomyces coelicolor (strain ATCC BAA-471 / A3(2) / M145), this protein is Diacetylchitobiose uptake system ATP-binding protein MsiK.